The sequence spans 269 residues: UPF0524 protein C3orf70 homolog A (269 aa).

Disordered regions lie at residues 139 to 203 (VQRP…DSGI) and 215 to 249 (DEDS…QDEC). Residues 141-150 (RPPPPTPNPT) are compositionally biased toward pro residues. Residues 151–164 (HQPQTAAPQPVPQR) show a composition bias toward low complexity. Residues 179–191 (QAKEKISAPKMDH) are compositionally biased toward basic and acidic residues. The segment covering 215 to 233 (DEDSCVDDDDEEEEDDELS) has biased composition (acidic residues).

This sequence belongs to the UPF0524 family.

Functionally, plays a role in neuronal and neurobehavioral development. Required for normal expression of neuronal markers elavl3 and eno2 and neurobehaviors related to circadian rhythm and changes in light-dark conditions. The chain is UPF0524 protein C3orf70 homolog A from Danio rerio (Zebrafish).